The primary structure comprises 286 residues: MRYIRLCIISLLATLPLAVHASPQPLEQIKLSESQLSGRVGMIEMDLASGRTLTAWRADERFPMMSTFKVVLCGAVLARVDAGDEQLERKIHYRQQDLVDYSPVSEKHLADGMTVGELCAAAITMSDNSAANLLLATVGGPAGLTAFLRQIGDNVTRLDRWETELNEALPGDARDTTTPASMAATLRKLLTSQRLSARSQRQLLQWMVDDRVAGPLIRSVLPAGWFIADKTGAGERGARGIVALLGPNNKAERIVVIYLRDTPASMAERNQQIAGIGAALIEHWQR.

An N-terminal signal peptide occupies residues 1-21 (MRYIRLCIISLLATLPLAVHA). Ser-66 acts as the Acyl-ester intermediate in catalysis. Cysteines 73 and 119 form a disulfide. Glu-164 serves as the catalytic Proton acceptor. Residue 230–232 (KTG) participates in substrate binding.

Belongs to the class-A beta-lactamase family.

It carries out the reaction a beta-lactam + H2O = a substituted beta-amino acid. The chain is Beta-lactamase SHV-1 (bla) from Escherichia coli.